Consider the following 217-residue polypeptide: Adenylate kinase (217 aa).

An ATP-binding site is contributed by 12 to 17 (GAGKGS). The segment at 32 to 61 (STGDMFRTHIKGSTPLGLEAKKYTDQGLLV) is NMP. AMP is bound by residues Thr33, Arg38, 59-61 (LLV), 87-90 (GYPR), and Gln94. An LID region spans residues 128–165 (GRRTCPVCGAIYHVDNYPPKVAGICDNDGATLVQRKDD). ATP is bound at residue Arg129. Residues Cys132 and Cys135 each coordinate Zn(2+). Residue 138–139 (IY) participates in ATP binding. 2 residues coordinate Zn(2+): Cys152 and Asp155. Residues Arg162 and Arg173 each contribute to the AMP site. ATP is bound at residue Gln201.

This sequence belongs to the adenylate kinase family. As to quaternary structure, monomer.

It is found in the cytoplasm. The enzyme catalyses AMP + ATP = 2 ADP. The protein operates within purine metabolism; AMP biosynthesis via salvage pathway; AMP from ADP: step 1/1. Functionally, catalyzes the reversible transfer of the terminal phosphate group between ATP and AMP. Plays an important role in cellular energy homeostasis and in adenine nucleotide metabolism. This chain is Adenylate kinase, found in Acholeplasma laidlawii (strain PG-8A).